The chain runs to 282 residues: Biotin synthase (282 aa).

In terms of domain architecture, Radical SAM core spans 1–228 (MQEIFLCSIS…NARLMAAGGR (228 aa)). [4Fe-4S] cluster is bound by residues C17, C21, and C24. [2Fe-2S] cluster is bound by residues C61, C96, C154, and R221.

Belongs to the radical SAM superfamily. Biotin synthase family. Homodimer. [4Fe-4S] cluster serves as cofactor. Requires [2Fe-2S] cluster as cofactor.

The catalysed reaction is (4R,5S)-dethiobiotin + (sulfur carrier)-SH + 2 reduced [2Fe-2S]-[ferredoxin] + 2 S-adenosyl-L-methionine = (sulfur carrier)-H + biotin + 2 5'-deoxyadenosine + 2 L-methionine + 2 oxidized [2Fe-2S]-[ferredoxin]. Its pathway is cofactor biosynthesis; biotin biosynthesis; biotin from 7,8-diaminononanoate: step 2/2. In terms of biological role, catalyzes the conversion of dethiobiotin (DTB) to biotin by the insertion of a sulfur atom into dethiobiotin via a radical-based mechanism. The sequence is that of Biotin synthase from Helicobacter acinonychis (strain Sheeba).